The primary structure comprises 279 residues: Isopentenyl-diphosphate delta-isomerase idi1 (279 aa).

Residue Lys-78 participates in substrate binding. Positions 82 and 93 each coordinate Mg(2+). In terms of domain architecture, Nudix hydrolase spans 91–249; the sequence is LLHRAFSVFL…GLKFTPWFKL (159 aa). The substrate site is built by Gln-111 and Lys-116. Residue Cys-128 is part of the active site. A substrate-binding site is contributed by Ser-129. The Nudix box motif lies at 129-162; it reads SHPLGIPGETGAELDAAVLGVKRAAQRKLDQELG. Mg(2+) is bound by residues Glu-191 and Glu-193. Residue Glu-193 is part of the active site.

This sequence belongs to the IPP isomerase type 1 family. Mg(2+) serves as cofactor.

The catalysed reaction is isopentenyl diphosphate = dimethylallyl diphosphate. It functions in the pathway isoprenoid biosynthesis; dimethylallyl diphosphate biosynthesis; dimethylallyl diphosphate from isopentenyl diphosphate: step 1/1. Isopentenyl-diphosphate delta-isomerase; part of the second module of ergosterol biosynthesis pathway that includes the middle steps of the pathway. Idi1 catalyzes the 1,3-allylic rearrangement of isopentenyl (IPP) to its highly electrophilic allylic isomer, dimethylallyl diphosphate (DMAPP). The second module is carried out in the vacuole and involves the formation of farnesyl diphosphate, which is also an important intermediate in the biosynthesis of ubiquinone, dolichol, heme and prenylated proteins. Activity by the mevalonate kinase erg12 (AFUA_4G07780) first converts mevalonate into 5-phosphomevalonate. 5-phosphomevalonate is then further converted to 5-diphosphomevalonate by the phosphomevalonate kinase erg8 (AFUA_5G10680). The diphosphomevalonate decarboxylase mvd1 (AFUA_4G07130) then produces isopentenyl diphosphate. The isopentenyl-diphosphate delta-isomerase idi1 (AFUA_6G11160) then catalyzes the 1,3-allylic rearrangement of the homoallylic substrate isopentenyl (IPP) to its highly electrophilic allylic isomer, dimethylallyl diphosphate (DMAPP). Finally the farnesyl diphosphate synthase erg20 (AFUA_5G02450) catalyzes the sequential condensation of isopentenyl pyrophosphate with dimethylallyl pyrophosphate, and then with the resultant geranylpyrophosphate to the ultimate product farnesyl pyrophosphate. This is Isopentenyl-diphosphate delta-isomerase idi1 from Aspergillus fumigatus (strain ATCC MYA-4609 / CBS 101355 / FGSC A1100 / Af293) (Neosartorya fumigata).